The chain runs to 123 residues: MPTINQLVRKGRLAIKAKSKVPALEACPQKRGVCTRVYTTTPKKPNSALRKVCKVRLTNGFEVISYIGGEGHNLQEHSVVLIRGGRVKDLPGVRYHTVRGSLDTAGVKDRKQSRSKYGAKRPK.

D89 bears the 3-methylthioaspartic acid mark. The interval 101–123 is disordered; it reads SLDTAGVKDRKQSRSKYGAKRPK. The segment covering 113 to 123 has biased composition (basic residues); the sequence is SRSKYGAKRPK.

This sequence belongs to the universal ribosomal protein uS12 family. Part of the 30S ribosomal subunit. Contacts proteins S8 and S17. May interact with IF1 in the 30S initiation complex.

In terms of biological role, with S4 and S5 plays an important role in translational accuracy. Functionally, interacts with and stabilizes bases of the 16S rRNA that are involved in tRNA selection in the A site and with the mRNA backbone. Located at the interface of the 30S and 50S subunits, it traverses the body of the 30S subunit contacting proteins on the other side and probably holding the rRNA structure together. The combined cluster of proteins S8, S12 and S17 appears to hold together the shoulder and platform of the 30S subunit. The protein is Small ribosomal subunit protein uS12 of Laribacter hongkongensis (strain HLHK9).